The chain runs to 341 residues: Tetraacyldisaccharide 4'-kinase (341 aa).

Position 54–61 (54–61) interacts with ATP; that stretch reads TVGGTGKT.

This sequence belongs to the LpxK family.

The enzyme catalyses a lipid A disaccharide + ATP = a lipid IVA + ADP + H(+). It functions in the pathway glycolipid biosynthesis; lipid IV(A) biosynthesis; lipid IV(A) from (3R)-3-hydroxytetradecanoyl-[acyl-carrier-protein] and UDP-N-acetyl-alpha-D-glucosamine: step 6/6. In terms of biological role, transfers the gamma-phosphate of ATP to the 4'-position of a tetraacyldisaccharide 1-phosphate intermediate (termed DS-1-P) to form tetraacyldisaccharide 1,4'-bis-phosphate (lipid IVA). In Mesorhizobium japonicum (strain LMG 29417 / CECT 9101 / MAFF 303099) (Mesorhizobium loti (strain MAFF 303099)), this protein is Tetraacyldisaccharide 4'-kinase.